Consider the following 352-residue polypeptide: Minor capsid protein P14 (352 aa).

The tract at residues 122–214 (YNEPAPKPKP…RPARRCDENP (93 aa)) is disordered. Positions 129 to 145 (PKPKPKPKPAPKPKPAP) are enriched in basic residues. Residues 146-204 (KPKPAPKPAPKPAPKPAPKPAPKPAPKPAPKPAPEPAPEPAPEPAPKPAPEPAPEPAPI) show a composition bias toward pro residues. A hydrophobic region spans residues 244–264 (WWLWGGIAILVIVLMIGGYFI).

Interacts with the major capsid protein.

The protein localises to the virion. In terms of biological role, one of the minor capsid proteins that constitute a network internal to the major capsid proteins and outside the lipid membrane. The minor capsid protein P14 does not serve a cross-linking function between neighboring capsomers, it may play a role in the viral capsid assembly. In Chlorella (PBCV-1), this protein is Minor capsid protein P14.